Consider the following 488-residue polypeptide: 3-octaprenyl-4-hydroxybenzoate carboxy-lyase (488 aa).

Residue Asn-172 coordinates Mn(2+). Prenylated FMN contacts are provided by residues Ile-175–Arg-177, Arg-189–Leu-191, and Arg-194–Gly-195. Glu-238 is a binding site for Mn(2+). Asp-287 serves as the catalytic Proton donor.

It belongs to the UbiD family. Homohexamer. The cofactor is prenylated FMN. Mn(2+) serves as cofactor.

Its subcellular location is the cell membrane. The catalysed reaction is a 4-hydroxy-3-(all-trans-polyprenyl)benzoate + H(+) = a 2-(all-trans-polyprenyl)phenol + CO2. It functions in the pathway cofactor biosynthesis; ubiquinone biosynthesis. In terms of biological role, catalyzes the decarboxylation of 3-octaprenyl-4-hydroxy benzoate to 2-octaprenylphenol, an intermediate step in ubiquinone biosynthesis. The chain is 3-octaprenyl-4-hydroxybenzoate carboxy-lyase from Shewanella oneidensis (strain ATCC 700550 / JCM 31522 / CIP 106686 / LMG 19005 / NCIMB 14063 / MR-1).